A 380-amino-acid polypeptide reads, in one-letter code: Succinate--CoA ligase [ADP-forming] subunit beta (380 aa).

In terms of domain architecture, ATP-grasp spans 9 to 236; sequence KGVFADAGIP…EAAGDELEAK (228 aa). Residues lysine 45, 52 to 54, glutamate 91, valine 94, and glutamate 99 contribute to the ATP site; that span reads GRG. Residues asparagine 191 and aspartate 205 each coordinate Mg(2+). Substrate contacts are provided by residues asparagine 256 and 313–315; that span reads GIT.

This sequence belongs to the succinate/malate CoA ligase beta subunit family. Heterotetramer of two alpha and two beta subunits. Requires Mg(2+) as cofactor.

It carries out the reaction succinate + ATP + CoA = succinyl-CoA + ADP + phosphate. It catalyses the reaction GTP + succinate + CoA = succinyl-CoA + GDP + phosphate. It participates in carbohydrate metabolism; tricarboxylic acid cycle; succinate from succinyl-CoA (ligase route): step 1/1. In terms of biological role, succinyl-CoA synthetase functions in the citric acid cycle (TCA), coupling the hydrolysis of succinyl-CoA to the synthesis of either ATP or GTP and thus represents the only step of substrate-level phosphorylation in the TCA. The beta subunit provides nucleotide specificity of the enzyme and binds the substrate succinate, while the binding sites for coenzyme A and phosphate are found in the alpha subunit. The sequence is that of Succinate--CoA ligase [ADP-forming] subunit beta from Natronomonas pharaonis (strain ATCC 35678 / DSM 2160 / CIP 103997 / JCM 8858 / NBRC 14720 / NCIMB 2260 / Gabara) (Halobacterium pharaonis).